Here is a 338-residue protein sequence, read N- to C-terminus: DNA-directed RNA polymerase subunit alpha (338 aa).

The segment at 1–226 is alpha N-terminal domain (alpha-NTD); that stretch reads MLIAQRPSLT…ELFGLARELN (226 aa). Residues 243-338 form an alpha C-terminal domain (alpha-CTD) region; sequence LAADLVMPIE…DAGFLETEHY (96 aa).

Belongs to the RNA polymerase alpha chain family. As to quaternary structure, homodimer. The RNAP catalytic core consists of 2 alpha, 1 beta, 1 beta' and 1 omega subunit. When a sigma factor is associated with the core the holoenzyme is formed, which can initiate transcription.

It carries out the reaction RNA(n) + a ribonucleoside 5'-triphosphate = RNA(n+1) + diphosphate. Its function is as follows. DNA-dependent RNA polymerase catalyzes the transcription of DNA into RNA using the four ribonucleoside triphosphates as substrates. The protein is DNA-directed RNA polymerase subunit alpha of Streptomyces avermitilis (strain ATCC 31267 / DSM 46492 / JCM 5070 / NBRC 14893 / NCIMB 12804 / NRRL 8165 / MA-4680).